A 436-amino-acid chain; its full sequence is Protein Z-dependent protease inhibitor (436 aa).

The first 20 residues, 1-20 (MRVVSSLFLPVLLAEVWLVS), serve as a signal peptide directing secretion. Residues Asn-23, Asn-42, and Asn-69 are each glycosylated (N-linked (GlcNAc...) asparagine). Residues 128–145 (AGPLILPALFKRVKETFS) are heparin-binding. N-linked (GlcNAc...) asparagine glycans are attached at residues Asn-172, Asn-189, and Asn-287.

The protein belongs to the serpin family. In terms of processing, phosphorylated by FAM20C in the extracellular medium. In terms of tissue distribution, expressed by the liver and secreted in plasma.

The protein localises to the secreted. In terms of biological role, inhibits activity of the coagulation protease factor Xa in the presence of PROZ, calcium and phospholipids. Also inhibits factor XIa in the absence of cofactors. In Rattus norvegicus (Rat), this protein is Protein Z-dependent protease inhibitor (Serpina10).